The sequence spans 495 residues: MADRNLRDLLAPWVAGLPARELREMTLDSRVAAAGDLFVAVVGHQADGRRYIPQAIAQGVAAIIAEAKDEASDGEIREMHGVPVVYLSQLNERLSALAGRFYHEPSENMRLVAVTGTNGKTTTTQLLAQWSQLLGETSAVMGTVGNGLLGKVIPTENTTGSAVDVQHVLASLVAQGATFGAMEVSSHGLVQHRVAALKFAASVFTNLSRDHLDYHGDMAHYEAAKWMLYSTHHHGQAIVNADDEVGRRWLASLPDAVAVSMEGHINPNCHGRWLKAEAVEYHDRGATIRFASSWGEGEIESRLMGAFNVSNLLLALATLLALGYPLTDLLKTAARLQPVCGRMEVFTAPGKPTVVVDYAHTPDALEKALQAARLHCAGKLWCVFGCGGDRDKGKRPLMGAIAEEFADIVVVTDDNPRTEEPRAIINDILAGMLDAGQVRVMEGRAEAVTNAIMQAKDNDVVLIAGKGHEDYQIVGTQRLDYSDRVTAARLLGVIA.

UDP-N-acetyl-alpha-D-muramoyl-L-alanyl-D-glutamate-binding positions include Leu27, Ser29, and 44 to 46 (HQA). ATP is bound at residue 116-122 (GTNGKTT). UDP-N-acetyl-alpha-D-muramoyl-L-alanyl-D-glutamate contacts are provided by residues Asn157, 158–159 (TT), Ser185, Gln191, and Arg193. The residue at position 225 (Lys225) is an N6-carboxylysine. Meso-2,6-diaminopimelate contacts are provided by residues Arg390, 414–417 (DNPR), Gly465, and Glu469. The short motif at 414–417 (DNPR) is the Meso-diaminopimelate recognition motif element.

It belongs to the MurCDEF family. MurE subfamily. Mg(2+) serves as cofactor. Post-translationally, carboxylation is probably crucial for Mg(2+) binding and, consequently, for the gamma-phosphate positioning of ATP.

Its subcellular location is the cytoplasm. It catalyses the reaction UDP-N-acetyl-alpha-D-muramoyl-L-alanyl-D-glutamate + meso-2,6-diaminopimelate + ATP = UDP-N-acetyl-alpha-D-muramoyl-L-alanyl-gamma-D-glutamyl-meso-2,6-diaminopimelate + ADP + phosphate + H(+). It functions in the pathway cell wall biogenesis; peptidoglycan biosynthesis. Its function is as follows. Catalyzes the addition of meso-diaminopimelic acid to the nucleotide precursor UDP-N-acetylmuramoyl-L-alanyl-D-glutamate (UMAG) in the biosynthesis of bacterial cell-wall peptidoglycan. This Salmonella typhimurium (strain LT2 / SGSC1412 / ATCC 700720) protein is UDP-N-acetylmuramoyl-L-alanyl-D-glutamate--2,6-diaminopimelate ligase.